A 428-amino-acid chain; its full sequence is MSTIIDIIGREVLDSRGNPTVEATAVLESGVVASAIVPSGASTGANEALELRDGDKKRFLGKGVLKAVENINTKIADLLIGEESEDQVRIDRLMIEADGTENKSNLGANAILAVSLAVARATAIEKEMPLYRYLGGVNAKVLPVPLMNVINGGAHADNELDFQEFMIVPVCGGSFKEALRAGVETFHVLKSVLKEKGYSTNVGDEGGFAPALRETKEALDMLMLAIDKAGYTPGEDIFIALDAASSEFYKDGKYLFEKRELTSDDMIILYEEIVGTYPVISIEDGLAENDWEGWKNLTQALGNKVQLVGDDLFTTNPKIIKEGIKNNIANSVLIKLNQIGTLTETLDAIEMARINNYTAIISHRSGESEDTFIADLAVATNAGQIKTGSASRTDRVAKYNQLIRIEEELGENAIFKGKQAFKKFQFEE.

Gln163 is a binding site for (2R)-2-phosphoglycerate. Glu205 serves as the catalytic Proton donor. Mg(2+)-binding residues include Asp242, Glu283, and Asp310. Residues Lys335, Arg364, Ser365, and Lys386 each coordinate (2R)-2-phosphoglycerate. Residue Lys335 is the Proton acceptor of the active site.

It belongs to the enolase family. Mg(2+) is required as a cofactor.

The protein resides in the cytoplasm. It is found in the secreted. Its subcellular location is the cell surface. It catalyses the reaction (2R)-2-phosphoglycerate = phosphoenolpyruvate + H2O. It functions in the pathway carbohydrate degradation; glycolysis; pyruvate from D-glyceraldehyde 3-phosphate: step 4/5. In terms of biological role, catalyzes the reversible conversion of 2-phosphoglycerate (2-PG) into phosphoenolpyruvate (PEP). It is essential for the degradation of carbohydrates via glycolysis. The sequence is that of Enolase from Sulfurihydrogenibium sp. (strain YO3AOP1).